Here is a 307-residue protein sequence, read N- to C-terminus: Membrane protein insertase YidC 2 (307 aa).

An N-terminal signal peptide occupies residues 1-23 (MKLTLNRILFSGLALSILFTLTG). Residue cysteine 24 is the site of N-palmitoyl cysteine attachment. Residue cysteine 24 is the site of S-diacylglycerol cysteine attachment. Transmembrane regions (helical) follow at residues 58-78 (LGYG…ILPL), 135-155 (LGGI…AMYF), 179-199 (VLTA…MMAV), 209-225 (TMMY…SFSL), and 231-251 (LYWL…TYLL). The disordered stretch occupies residues 263–307 (YAKNPPKAYQSTSSRKDVTPSQNMEQANLPKKIKSNRNAGKQRKR). Residues 271 to 288 (YQSTSSRKDVTPSQNMEQ) show a composition bias toward polar residues. A compositionally biased stretch (basic residues) spans 293–307 (KKIKSNRNAGKQRKR).

It belongs to the OXA1/ALB3/YidC family. Type 2 subfamily.

The protein localises to the cell membrane. In terms of biological role, required for the insertion and/or proper folding and/or complex formation of integral membrane proteins into the membrane. Involved in integration of membrane proteins that insert both dependently and independently of the Sec translocase complex, as well as at least some lipoproteins. The protein is Membrane protein insertase YidC 2 of Streptococcus pyogenes serotype M3 (strain ATCC BAA-595 / MGAS315).